We begin with the raw amino-acid sequence, 218 residues long: Probable transaldolase (218 aa).

The active-site Schiff-base intermediate with substrate is the lysine 87.

The protein belongs to the transaldolase family. Type 3B subfamily.

The protein resides in the cytoplasm. The enzyme catalyses D-sedoheptulose 7-phosphate + D-glyceraldehyde 3-phosphate = D-erythrose 4-phosphate + beta-D-fructose 6-phosphate. The protein operates within carbohydrate degradation; pentose phosphate pathway; D-glyceraldehyde 3-phosphate and beta-D-fructose 6-phosphate from D-ribose 5-phosphate and D-xylulose 5-phosphate (non-oxidative stage): step 2/3. In terms of biological role, transaldolase is important for the balance of metabolites in the pentose-phosphate pathway. The polypeptide is Probable transaldolase (Bacteroides fragilis (strain YCH46)).